Reading from the N-terminus, the 792-residue chain is Ribonucleoside-diphosphate reductase large subunit (792 aa).

Positions 1 to 92 (MHVIKRDGRQ…VSNLHKETKK (92 aa)) constitute an ATP-cone domain. ATP-binding positions include 5-6 (KR), 11-17 (ERVMFDK), Thr-53, and Asp-57. Lys-17 is subject to N6-acetyllysine. Residues Ser-202 and Ser-217 each contribute to the GDP site. Cysteines 218 and 444 form a disulfide. DTTP-binding positions include 226–228 (DSI), Lys-243, Arg-256, and 263–264 (AG). Lys-376 bears the N6-acetyllysine mark. Asn-427 provides a ligand contact to GDP. The active-site Proton acceptor is Asn-427. Cys-429 acts as the Cysteine radical intermediate in catalysis. Residues Glu-431 and 604 to 607 (TAST) each bind GDP. The Proton acceptor role is filled by Glu-431. A Phosphothreonine modification is found at Thr-751.

The protein belongs to the ribonucleoside diphosphate reductase large chain family. Heterodimer of a large and a small subunit. Heterodimer with small subunit RRM2 or RRM2B. The heterodimer with RRM2 has higher catalytic activity than the heterodimer with RRM2B. Interacts with AHCYL1 which inhibits its activity.

It localises to the cytoplasm. It catalyses the reaction a 2'-deoxyribonucleoside 5'-diphosphate + [thioredoxin]-disulfide + H2O = a ribonucleoside 5'-diphosphate + [thioredoxin]-dithiol. Under complex allosteric control mediated by deoxynucleoside triphosphates and ATP binding to separate specificity and activation sites on the M1 subunit. The type of nucleotide bound at the specificity site determines substrate preference. It seems probable that ATP makes the enzyme reduce CDP and UDP, dGTP favors ADP reduction and dTTP favors GDP reduction. Stimulated by ATP and inhibited by dATP binding to the activity site, the dATP inhibition is mediated by AHCYL1 which stabilizes dATP in the site. Its function is as follows. Provides the precursors necessary for DNA synthesis. Catalyzes the biosynthesis of deoxyribonucleotides from the corresponding ribonucleotides. The protein is Ribonucleoside-diphosphate reductase large subunit (RRM1) of Homo sapiens (Human).